The primary structure comprises 438 residues: Glutamyl-tRNA reductase (438 aa).

Substrate contacts are provided by residues 49 to 52 (TCNR), serine 109, 114 to 116 (EGQ), and glutamine 120. Residue cysteine 50 is the Nucleophile of the active site. 198–203 (GAGRMS) is an NADP(+) binding site.

This sequence belongs to the glutamyl-tRNA reductase family. Homodimer.

It carries out the reaction (S)-4-amino-5-oxopentanoate + tRNA(Glu) + NADP(+) = L-glutamyl-tRNA(Glu) + NADPH + H(+). The protein operates within porphyrin-containing compound metabolism; protoporphyrin-IX biosynthesis; 5-aminolevulinate from L-glutamyl-tRNA(Glu): step 1/2. It functions in the pathway porphyrin-containing compound metabolism; chlorophyll biosynthesis. Its function is as follows. Catalyzes the NADPH-dependent reduction of glutamyl-tRNA(Glu) to glutamate 1-semialdehyde (GSA). This Synechococcus sp. (strain WH7803) protein is Glutamyl-tRNA reductase.